A 147-amino-acid polypeptide reads, in one-letter code: Deoxyuridine 5'-triphosphate nucleotidohydrolase (147 aa).

Arginine 24 contributes to the Mg(2+) binding site. DUTP is bound by residues 68–70 (PRS), 82–85 (GVID), tyrosine 88, glycine 93, isoleucine 95, and arginine 111.

Belongs to the dUTPase family. It depends on Mg(2+) as a cofactor.

The enzyme catalyses dUTP + H2O = dUMP + diphosphate + H(+). Functionally, this enzyme is involved in nucleotide metabolism: it produces dUMP, the immediate precursor of thymidine nucleotides and it decreases the intracellular concentration of dUTP so that uracil cannot be incorporated into DNA. In Homo sapiens (Human), this protein is Deoxyuridine 5'-triphosphate nucleotidohydrolase (OPG046).